A 235-amino-acid polypeptide reads, in one-letter code: Phosphoribosylaminoimidazole-succinocarboxamide synthase (235 aa).

It belongs to the SAICAR synthetase family.

It catalyses the reaction 5-amino-1-(5-phospho-D-ribosyl)imidazole-4-carboxylate + L-aspartate + ATP = (2S)-2-[5-amino-1-(5-phospho-beta-D-ribosyl)imidazole-4-carboxamido]succinate + ADP + phosphate + 2 H(+). The protein operates within purine metabolism; IMP biosynthesis via de novo pathway; 5-amino-1-(5-phospho-D-ribosyl)imidazole-4-carboxamide from 5-amino-1-(5-phospho-D-ribosyl)imidazole-4-carboxylate: step 1/2. The protein is Phosphoribosylaminoimidazole-succinocarboxamide synthase of Streptococcus gordonii (strain Challis / ATCC 35105 / BCRC 15272 / CH1 / DL1 / V288).